Here is a 936-residue protein sequence, read N- to C-terminus: Bifunctional uridylyltransferase/uridylyl-removing enzyme (936 aa).

The tract at residues 1-372 (MTIPRIRQPR…SIATLLMRKR (372 aa)) is uridylyltransferase. The uridylyl-removing stretch occupies residues 373 to 727 (NLGDFVLDGG…VLPDPERAVS (355 aa)). In terms of domain architecture, HD spans 488-610 (TDEHTIRAIG…VQSVERLHLL (123 aa)). ACT domains lie at 728–809 (EVLV…KALR) and 840–915 (VIEI…TVPR). Residues 915-930 (RKVEEGAEQGAEKADA) show a composition bias toward basic and acidic residues. Residues 915-936 (RKVEEGAEQGAEKADAGEIVAA) form a disordered region.

Belongs to the GlnD family. Mg(2+) serves as cofactor.

It catalyses the reaction [protein-PII]-L-tyrosine + UTP = [protein-PII]-uridylyl-L-tyrosine + diphosphate. The catalysed reaction is [protein-PII]-uridylyl-L-tyrosine + H2O = [protein-PII]-L-tyrosine + UMP + H(+). With respect to regulation, uridylyltransferase (UTase) activity is inhibited by glutamine, while glutamine activates uridylyl-removing (UR) activity. Functionally, modifies, by uridylylation and deuridylylation, the PII regulatory proteins (GlnB and homologs), in response to the nitrogen status of the cell that GlnD senses through the glutamine level. Under low glutamine levels, catalyzes the conversion of the PII proteins and UTP to PII-UMP and PPi, while under higher glutamine levels, GlnD hydrolyzes PII-UMP to PII and UMP (deuridylylation). Thus, controls uridylylation state and activity of the PII proteins, and plays an important role in the regulation of nitrogen fixation and metabolism. The protein is Bifunctional uridylyltransferase/uridylyl-removing enzyme of Rhodospirillum rubrum (strain ATCC 11170 / ATH 1.1.1 / DSM 467 / LMG 4362 / NCIMB 8255 / S1).